Consider the following 539-residue polypeptide: Sorting nexin-27 (539 aa).

The disordered stretch occupies residues 1-40; it reads MADEDGEGIHPSAPHRNGGGGGGSGLHCAGNGGGGGGGPR. The span at 17 to 39 shows a compositional bias: gly residues; the sequence is NGGGGGGSGLHCAGNGGGGGGGP. The PDZ domain maps to 41–134; the sequence is VVRIVKSESG…ELILTVLSVP (94 aa). A phosphoserine mark is found at Ser49 and Ser60. In terms of domain architecture, PX spans 159–267; that stretch reads QAVPISVPTY…EFLSESDENY (109 aa). Residues 271-360 form the Ras-associating domain; sequence SDVELRVALP…TCLTIRKWLF (90 aa). Residues 271–360 form an FERM-like region F1 region; it reads SDVELRVALP…TCLTIRKWLF (90 aa). The interval 371-419 is FERM-like region F2; sequence NDLAVTYFFHQAVDDVKKGYIKAEEKSYQLQKLHEQRKMVMYLNMLRTC. The segment at 423 to 523 is FERM-like region F3; sequence NEIIFPHCAC…RVFCELKWRK (101 aa).

In terms of assembly, core component of the SNX27-retromer, a multiprotein complex composed of SNX27, the WASH complex and the retromer complex. Interacts (via the FERM-like regions) with the WASH complex. Interacts with SNX1. Interacts with CYTIP. Interacts with DGKZ. Interacts with MCC. Interacts (via PDZ domain) with a number of target transmembrane proteins (via PDZ-binding motif): ABCC4, ADRB2, ARHGEF7, GRIA1, GRIA2, GRIN1, GRIN2A GRIN2C, KCNJ6, KCNJ9 and SLC2A1/GLUT1. Interacts (via PDZ domains) with SLC9A3; directs SLC9A3 membrane insertion from early endosomes to the plasma membrane. In terms of tissue distribution, expressed in cells of hematopoietic origin.

It localises to the early endosome membrane. The protein resides in the cytoplasm. Its subcellular location is the cytosol. Involved in the retrograde transport from endosome to plasma membrane, a trafficking pathway that promotes the recycling of internalized transmembrane proteins. Following internalization, endocytosed transmembrane proteins are delivered to early endosomes and recycled to the plasma membrane instead of being degraded in lysosomes. SNX27 specifically binds and directs sorting of a subset of transmembrane proteins containing a PDZ-binding motif at the C-terminus: following interaction with target transmembrane proteins, associates with the retromer complex, preventing entry into the lysosomal pathway, and promotes retromer-tubule based plasma membrane recycling. SNX27 also binds with the WASH complex. Interacts with membranes containing phosphatidylinositol-3-phosphate (PtdIns(3P)). May participate in establishment of natural killer cell polarity. Recruits CYTIP to early endosomes. The protein is Sorting nexin-27 (Snx27) of Mus musculus (Mouse).